Consider the following 144-residue polypeptide: Peroxisomal membrane protein PEX34 (144 aa).

Helical transmembrane passes span 18–30 (NIWSGVSSLLDFF), 52–73 (VWLCYSCISVIKCVWKLIKLCK), and 109–131 (TAALLQDLSYLMVLIYPGTRLFK).

As to quaternary structure, homooligomer. Interacts with PEX11, PEX25 and PEX27.

The protein resides in the peroxisome membrane. In concert with the three peroxisome divisional factors, PEX11, PEX25 and PEX27, controls peroxisome morphology and abundance under conditions of peroxisome proliferation. Maintains mature peroxisomes in actively dividing cells. This chain is Peroxisomal membrane protein PEX34 (PEX34), found in Saccharomyces cerevisiae (strain ATCC 204508 / S288c) (Baker's yeast).